The primary structure comprises 266 residues: Glucosamine-6-phosphate deaminase (266 aa).

The active-site Proton acceptor; for enolization step is Asp-72. Asp-141 (for ring-opening step) is an active-site residue. The Proton acceptor; for ring-opening step role is filled by His-143. Glu-148 functions as the For ring-opening step in the catalytic mechanism.

This sequence belongs to the glucosamine/galactosamine-6-phosphate isomerase family. NagB subfamily. As to quaternary structure, homohexamer.

The catalysed reaction is alpha-D-glucosamine 6-phosphate + H2O = beta-D-fructose 6-phosphate + NH4(+). It participates in amino-sugar metabolism; N-acetylneuraminate degradation; D-fructose 6-phosphate from N-acetylneuraminate: step 5/5. Its activity is regulated as follows. Allosterically activated by N-acetylglucosamine 6-phosphate (GlcNAc6P). Its function is as follows. Catalyzes the reversible isomerization-deamination of glucosamine 6-phosphate (GlcN6P) to form fructose 6-phosphate (Fru6P) and ammonium ion. This chain is Glucosamine-6-phosphate deaminase, found in Salmonella arizonae (strain ATCC BAA-731 / CDC346-86 / RSK2980).